Consider the following 554-residue polypeptide: MDWLQSLLWDPSSVAHIVFLYAFVVAAGVYLGKIKIFGVSLGVTFVLFAGILMGHFGFTADTHILHFIREFGLILFVFCIGLQVGPSFFSSFKKGGMTLNLLAVGIVVLNIAVALGLYYLWNGRVELPMMVGILYGAVTNTPGLGAANEALNQLSYNGPQIALGYACAYPLGVVGIIGSIIAIRYIFRVNMTKEEESLKTQSGDAHHKPHMMSLEVRNESISGKTLIEIKEFLGRNFVCSRIRHEGHVSIPNHETIFNMGDQLFIVCSEEDAPAITVFIGKEVELDWEKQDLPMVSRRILVTKPEINGKTLGSMHFRSMYGVNVTRVNRSGMDLFADPNLILQVGDRVMVVGQQDAVERVAGVLGNQLKRLDTPNIVTIFVGIFLGILLGSLPIAFPGMPTPLKLGLAGGPLVVAILIGRFGHKLHLVTYTTMSANLMLREIGIVLFLASVGIDAGANFVQTVVEGDGLLYVGCGFLITVIPLLIIGAIARLYYKVNYFTLMGLIAGSNTDPPALAYANQVTSSDAPAVGYSTVYPLSMFLRILTGQMILLAMM.

The next 5 helical transmembrane spans lie at 13 to 31, 36 to 58, 73 to 92, 99 to 121, and 161 to 183; these read SVAHIVFLYAFVVAAGVYL, IFGVSLGVTFVLFAGILMGHFGF, LILFVFCIGLQVGPSFFSSF, LNLLAVGIVVLNIAVALGLYYLW, and IALGYACAYPLGVVGIIGSIIAI. RCK C-terminal domains lie at 199-281 and 282-366; these read KTQS…FIGK and EVEL…VLGN. Transmembrane regions (helical) follow at residues 376 to 395, 405 to 422, 442 to 464, and 468 to 490; these read IVTIFVGIFLGILLGSLPIA, LGLAGGPLVVAILIGRFG, IGIVLFLASVGIDAGANFVQTVV, and GLLYVGCGFLITVIPLLIIGAIA.

It belongs to the AAE transporter (TC 2.A.81) family.

Its subcellular location is the cell membrane. This is an uncharacterized protein from Bacteroides thetaiotaomicron (strain ATCC 29148 / DSM 2079 / JCM 5827 / CCUG 10774 / NCTC 10582 / VPI-5482 / E50).